The sequence spans 76 residues: Sulfur carrier protein TusA (76 aa).

Residue C15 is the Cysteine persulfide intermediate of the active site.

The protein belongs to the sulfur carrier protein TusA family. Mostly a monomer, a small portion forms homodimer via intermolecular disulfide bonds. Tightly interacts with DsrEFH.

It localises to the cytoplasm. The protein operates within energy metabolism; sulfur metabolism. Functionally, sulfur carrier protein involved in sulfur trafficking for oxidative dissimilatory sulfur metabolism. Component of a sulfur relay system that starts with the sulfur-mobilizing rhodanese-like protein Rhd_2599 (Alvin_2599), which transfers the sulfur from a low-molecular-weight thiol, maybe glutathione, to the TusA protein (Alvin_2600); TusA serves as the sulfur donor for DsrEFH, which persulfurates DsrC; persulfurated DsrC very probably serves as a direct substrate for reverse-acting sulfite reductase, DsrAB. TusA seems to be not exclusively dedicated to sulfur oxidation and may have other important roles in the cell. Might also act as a sulfur mediator required for 2-thiouridine formation of tRNA. This chain is Sulfur carrier protein TusA, found in Allochromatium vinosum (strain ATCC 17899 / DSM 180 / NBRC 103801 / NCIMB 10441 / D) (Chromatium vinosum).